The primary structure comprises 1269 residues: DNA-directed RNA polymerase subunit beta (1269 aa).

It belongs to the RNA polymerase beta chain family. As to quaternary structure, the RNAP catalytic core consists of 2 alpha, 1 beta, 1 beta' and 1 omega subunit. When a sigma factor is associated with the core the holoenzyme is formed, which can initiate transcription.

The catalysed reaction is RNA(n) + a ribonucleoside 5'-triphosphate = RNA(n+1) + diphosphate. Its function is as follows. DNA-dependent RNA polymerase catalyzes the transcription of DNA into RNA using the four ribonucleoside triphosphates as substrates. In Porphyromonas gingivalis (strain ATCC 33277 / DSM 20709 / CIP 103683 / JCM 12257 / NCTC 11834 / 2561), this protein is DNA-directed RNA polymerase subunit beta.